A 278-amino-acid polypeptide reads, in one-letter code: MCRRPDCGFSFSPGPVILLWCCLLLPIVSSAAVSVAPTAAEKVPAECPELTRRCLLGEVFQGDKYESWLRPLVNVTGRDGPLSQLIRYRPVTPEAANSVLLDEAFLDTLALLYNNPDQLRALLTLLSSDTAPRWMTVMRGYSECGDGSPAVYTCVDDLCRGYDLTRLSYGRSIFTEHVLGFELVLPSLFNVVVAIRNEATRTNRAVRLPVSTAAAPEGITLFYGLYNAVKEFCLRHQLDPPLLRHLDKYYAGLPPELKQTRVNLPAHSRYGPQAVDAR.

An N-terminal signal peptide occupies residues 1 to 30 (MCRRPDCGFSFSPGPVILLWCCLLLPIVSS). Residues 43–256 (VPAECPELTR…DKYYAGLPPE (214 aa)) form the gL betaherpesvirus-type domain. Cysteines 154 and 159 form a disulfide.

This sequence belongs to the herpesviridae glycoprotein L (gL) family. Betaherpesvirinae gL subfamily. Interacts with glycoprotein H (gH); this interaction is necessary for the correct processing and cell surface expression of gH. Forms the envelope pentamer complex (PC) composed of gH, gL, UL128, UL130, and UL131A. The pentamer interacts with host NRP2. Forms the envelope trimer complex composed of gH, gL, and gO. The trimer interacts with host PDGFRA. The trimer also interacts with host EPHA2.

The protein localises to the virion membrane. The protein resides in the host cell membrane. It localises to the host Golgi apparatus. Its subcellular location is the host trans-Golgi network. Its function is as follows. The heterodimer glycoprotein H-glycoprotein L is required for the fusion of viral and plasma membranes leading to virus entry into the host cell. Acts as a functional inhibitor of gH and maintains gH in an inhibited form. Upon binding to host integrins, gL dissociates from gH leading to activation of the viral fusion glycoproteins gB and gH. In human cytomegalovirus, forms two distincts complexes to mediate viral entry, a trimer and a pentamer at the surface of the virion envelope. The gH-gL-gO trimer is required for infection in fibroblasts by interacting with host PDGFRA, and in glioblastoma cells by interacting with host EPHA2. The gH-gL-UL128-UL130-UL131A pentamer is essential for viral entry in epithelial, endothelial and myeloid cells via interaction with host NRP2. In Human cytomegalovirus (strain 5160) (HHV-5), this protein is Envelope glycoprotein L.